The sequence spans 148 residues: Putative pre-16S rRNA nuclease (148 aa).

Belongs to the YqgF nuclease family.

It localises to the cytoplasm. Functionally, could be a nuclease involved in processing of the 5'-end of pre-16S rRNA. This Chlamydia trachomatis serovar A (strain ATCC VR-571B / DSM 19440 / HAR-13) protein is Putative pre-16S rRNA nuclease.